Here is a 116-residue protein sequence, read N- to C-terminus: Large ribosomal subunit protein uL18 (116 aa).

Belongs to the universal ribosomal protein uL18 family. In terms of assembly, part of the 50S ribosomal subunit; part of the 5S rRNA/L5/L18/L25 subcomplex. Contacts the 5S and 23S rRNAs.

In terms of biological role, this is one of the proteins that bind and probably mediate the attachment of the 5S RNA into the large ribosomal subunit, where it forms part of the central protuberance. The protein is Large ribosomal subunit protein uL18 of Cellvibrio japonicus (strain Ueda107) (Pseudomonas fluorescens subsp. cellulosa).